A 506-amino-acid polypeptide reads, in one-letter code: Acyl-CoA-binding domain-containing protein 5 (506 aa).

The ACB domain maps to Tyr44–Met133. Residues Ile55–Phe64, Tyr75–Lys79, Lys101, and Tyr120 contribute to the an acyl-CoA site. The interval Ala175–Ser217 is disordered. The stretch at Lys181–Asp209 forms a coiled coil. Phosphoserine is present on residues Ser184, Ser185, Ser187, Ser191, Ser206, and Ser233. A compositionally biased stretch (basic and acidic residues) spans Glu198–Ser217. 2 disordered regions span residues Phe234–Met302 and Ala345–Arg417. Basic and acidic residues predominate over residues Ser238–Thr257. Polar residues predominate over residues Asp258–Thr267. The residue at position 301 (Ser301) is a Phosphoserine. A compositionally biased stretch (basic and acidic residues) spans Gly348–Arg360. Ser403 bears the Phosphoserine mark. A compositionally biased stretch (basic and acidic residues) spans Asp406–Ser416. Residues Leu426–Ser451 adopt a coiled-coil conformation. Position 444 is an N6-acetyllysine (Lys444). The chain crosses the membrane as a helical span at residues Gly478–Tyr498.

It belongs to the ATG37 family.

The protein resides in the peroxisome membrane. Its function is as follows. Acyl-CoA binding protein which acts as the peroxisome receptor for pexophagy but is dispensable for aggrephagy and nonselective autophagy. Binds medium- and long-chain acyl-CoA esters. This chain is Acyl-CoA-binding domain-containing protein 5 (Acbd5), found in Rattus norvegicus (Rat).